The chain runs to 354 residues: Protein-glutamate methylesterase/protein-glutamine glutaminase (354 aa).

Residues 7 to 124 (KVLCVDDSAL…REGMLEYTEM (118 aa)) form the Response regulatory domain. 4-aspartylphosphate is present on aspartate 58. The 193-residue stretch at 156-348 (LLSSEKVIII…AALMKRAEAS (193 aa)) folds into the CheB-type methylesterase domain. Active-site residues include serine 168, histidine 194, and aspartate 290.

It belongs to the CheB family. Post-translationally, phosphorylated by CheA. Phosphorylation of the N-terminal regulatory domain activates the methylesterase activity.

The protein resides in the cytoplasm. The catalysed reaction is [protein]-L-glutamate 5-O-methyl ester + H2O = L-glutamyl-[protein] + methanol + H(+). It carries out the reaction L-glutaminyl-[protein] + H2O = L-glutamyl-[protein] + NH4(+). Involved in chemotaxis. Part of a chemotaxis signal transduction system that modulates chemotaxis in response to various stimuli. Catalyzes the demethylation of specific methylglutamate residues introduced into the chemoreceptors (methyl-accepting chemotaxis proteins or MCP) by CheR. Also mediates the irreversible deamidation of specific glutamine residues to glutamic acid. The protein is Protein-glutamate methylesterase/protein-glutamine glutaminase of Chromohalobacter salexigens (strain ATCC BAA-138 / DSM 3043 / CIP 106854 / NCIMB 13768 / 1H11).